Here is a 102-residue protein sequence, read N- to C-terminus: Glutaredoxin 1 (102 aa).

The 96-residue stretch at Met1–Lys96 folds into the Glutaredoxin domain. A disulfide bridge connects residues Cys17 and Cys20.

Belongs to the glutaredoxin family. Monomer.

Its subcellular location is the cytoplasm. Its function is as follows. Has a glutathione-disulfide oxidoreductase activity in the presence of NADPH and glutathione reductase. Reduces low molecular weight disulfides and proteins. The chain is Glutaredoxin 1 (grxC1) from Rickettsia felis (strain ATCC VR-1525 / URRWXCal2) (Rickettsia azadi).